A 278-amino-acid polypeptide reads, in one-letter code: 4-deoxy-L-threo-5-hexosulose-uronate ketol-isomerase (278 aa).

Residues His-196, His-198, Glu-203, and His-245 each coordinate Zn(2+).

It belongs to the KduI family. The cofactor is Zn(2+).

It catalyses the reaction 5-dehydro-4-deoxy-D-glucuronate = 3-deoxy-D-glycero-2,5-hexodiulosonate. It participates in glycan metabolism; pectin degradation; 2-dehydro-3-deoxy-D-gluconate from pectin: step 4/5. Functionally, catalyzes the isomerization of 5-dehydro-4-deoxy-D-glucuronate to 3-deoxy-D-glycero-2,5-hexodiulosonate. The sequence is that of 4-deoxy-L-threo-5-hexosulose-uronate ketol-isomerase from Salmonella heidelberg (strain SL476).